Consider the following 238-residue polypeptide: 7-cyano-7-deazaguanine synthase (238 aa).

Residue 12–22 participates in ATP binding; it reads FSGGQDSGTCL. 4 residues coordinate Zn(2+): Cys-200, Cys-215, Cys-218, and Cys-221.

The protein belongs to the QueC family. The cofactor is Zn(2+).

It carries out the reaction 7-carboxy-7-deazaguanine + NH4(+) + ATP = 7-cyano-7-deazaguanine + ADP + phosphate + H2O + H(+). It participates in purine metabolism; 7-cyano-7-deazaguanine biosynthesis. Functionally, catalyzes the ATP-dependent conversion of 7-carboxy-7-deazaguanine (CDG) to 7-cyano-7-deazaguanine (preQ(0)). The protein is 7-cyano-7-deazaguanine synthase of Lawsonia intracellularis (strain PHE/MN1-00).